The following is a 612-amino-acid chain: DNA mismatch repair protein MutL (612 aa).

It belongs to the DNA mismatch repair MutL/HexB family.

In terms of biological role, this protein is involved in the repair of mismatches in DNA. It is required for dam-dependent methyl-directed DNA mismatch repair. May act as a 'molecular matchmaker', a protein that promotes the formation of a stable complex between two or more DNA-binding proteins in an ATP-dependent manner without itself being part of a final effector complex. This is DNA mismatch repair protein MutL from Herminiimonas arsenicoxydans.